The following is a 103-amino-acid chain: Large ribosomal subunit protein bL21 (103 aa).

It belongs to the bacterial ribosomal protein bL21 family. Part of the 50S ribosomal subunit. Contacts protein L20.

In terms of biological role, this protein binds to 23S rRNA in the presence of protein L20. This is Large ribosomal subunit protein bL21 from Pasteurella multocida (strain Pm70).